A 234-amino-acid polypeptide reads, in one-letter code: MHILIPAAGMGKRMGASHNKLRLQLLGKPLLAWTLAAVAAAEAIEWIGVIGQPEDFPIWEALLEDLNLRQPVHLITGGETRQASVFHGLQALPKTAEQVLIHDGARCLATPDLINRCAQALGTYAGLIAAVPVKDTIKIVNREGVVVQTPERDSLWAAQTPQGFRVEPLRIAHEMAVAKGWEVTDDAALFERLGYAVHIVLGEETNLKITTPSDLPLAERILQHRREQEQDTLG.

Belongs to the IspD/TarI cytidylyltransferase family. IspD subfamily.

The catalysed reaction is 2-C-methyl-D-erythritol 4-phosphate + CTP + H(+) = 4-CDP-2-C-methyl-D-erythritol + diphosphate. It functions in the pathway isoprenoid biosynthesis; isopentenyl diphosphate biosynthesis via DXP pathway; isopentenyl diphosphate from 1-deoxy-D-xylulose 5-phosphate: step 2/6. In terms of biological role, catalyzes the formation of 4-diphosphocytidyl-2-C-methyl-D-erythritol from CTP and 2-C-methyl-D-erythritol 4-phosphate (MEP). The protein is 2-C-methyl-D-erythritol 4-phosphate cytidylyltransferase of Thermosynechococcus vestitus (strain NIES-2133 / IAM M-273 / BP-1).